Consider the following 213-residue polypeptide: ATP-dependent dethiobiotin synthetase BioD 2 (213 aa).

Residue 13 to 18 coordinates ATP; the sequence is DIGKTI. Thr17 contacts Mg(2+). Lys38 is a catalytic residue. Thr42 contacts substrate. Residues Asp50 and 115–118 each bind ATP; that span reads EGAG. Residues Asp50 and Glu115 each coordinate Mg(2+).

Belongs to the dethiobiotin synthetase family. Homodimer. The cofactor is Mg(2+).

The protein localises to the cytoplasm. It catalyses the reaction (7R,8S)-7,8-diammoniononanoate + CO2 + ATP = (4R,5S)-dethiobiotin + ADP + phosphate + 3 H(+). It participates in cofactor biosynthesis; biotin biosynthesis; biotin from 7,8-diaminononanoate: step 1/2. In terms of biological role, catalyzes a mechanistically unusual reaction, the ATP-dependent insertion of CO2 between the N7 and N8 nitrogen atoms of 7,8-diaminopelargonic acid (DAPA, also called 7,8-diammoniononanoate) to form a ureido ring. This chain is ATP-dependent dethiobiotin synthetase BioD 2, found in Pasteurella multocida (strain Pm70).